Consider the following 204-residue polypeptide: Prephenate decarboxylase (204 aa).

Belongs to the prephenate decarboxylase family.

Its subcellular location is the cytoplasm. It catalyses the reaction prephenate + H(+) = 3-[(4R)-4-hydroxycyclohexa-1,5-dien-1-yl]-2-oxopropanoate + CO2. Its pathway is antibiotic biosynthesis; bacilysin biosynthesis. In terms of biological role, part of the bacABCDEF operon responsible for the biosynthesis of the nonribosomally synthesized dipeptide antibiotic bacilysin, composed of L-alanine and L-anticapsin. Bacilysin is an irreversible inactivator of the glutaminase domain of glucosamine synthetase. BacA is an unusual prephenate decarboxylase that avoids the typical aromatization of the cyclohexadienol ring of prephenate. BacA catalyzes the protonation of prephenate (1-carboxy-4-hydroxy-alpha-oxo-2,5-cyclohexadiene-1-propanoic acid) at C6 position, followed by a decarboxylation to produce the endocyclic-delta(4),delta(8)-7R-dihydro-hydroxyphenylpyruvate (en-H2HPP). En-H2HPP is able to undergo a slow nonenzymatic isomerization to produce the exocyclic-delta(3),delta(5)-dihydro-hydroxyphenylpyruvate (ex-H2HPP). BacA isomerizes only the pro-R double bond in prephenate. The protein is Prephenate decarboxylase of Bacillus subtilis.